A 513-amino-acid polypeptide reads, in one-letter code: GMP synthase [glutamine-hydrolyzing] (513 aa).

The region spanning 3-192 (TVVVLDYGSQ…VSKVAKMEKN (190 aa)) is the Glutamine amidotransferase type-1 domain. Cys80 serves as the catalytic Nucleophile. Residues His166 and Glu168 contribute to the active site. A GMPS ATP-PPase domain is found at 193-388 (WKMTDFIEEK…LGLPDEMINR (196 aa)). Position 220-226 (220-226 (SGGVDSS)) interacts with ATP.

In terms of assembly, homodimer.

The catalysed reaction is XMP + L-glutamine + ATP + H2O = GMP + L-glutamate + AMP + diphosphate + 2 H(+). It participates in purine metabolism; GMP biosynthesis; GMP from XMP (L-Gln route): step 1/1. Catalyzes the synthesis of GMP from XMP. The polypeptide is GMP synthase [glutamine-hydrolyzing] (Thermosipho africanus (strain TCF52B)).